Reading from the N-terminus, the 94-residue chain is Antifungal protein (94 aa).

Positions 1–21 are cleaved as a signal peptide; it reads MKFVSLASLGFALVAALGAVA. Residues 22–43 constitute a propeptide that is removed on maturation; the sequence is TPVEADSLTAGGLDARDESAVL. Disulfide bonds link C50–C76, C57–C83, C69–C71, and C92–C94.

It belongs to the antifungal protein pafB family.

Its subcellular location is the secreted. The protein localises to the host cytoplasm. Antifungal protein that acts as an inhibitor of growth of a variety of fungal species. The polypeptide is Antifungal protein (afp) (Aspergillus giganteus).